Reading from the N-terminus, the 110-residue chain is Coiled-coil-helix-coiled-coil-helix domain-containing protein 5 (110 aa).

Residue Met-1 is modified to N-acetylmethionine. CHCH domains lie at 9–52 (ARYC…PIIR) and 55–97 (RQAC…QPPR). 4 short sequence motifs (cx9C motif) span residues 12 to 22 (CGRELEQYGQC), 34 to 44 (CHYLKMSIAQC), 58 to 68 (CAQPFEAFEEC), and 79 to 89 (CAEHMRRFLQC). 4 disulfide bridges follow: Cys-12/Cys-44, Cys-22/Cys-34, Cys-58/Cys-89, and Cys-68/Cys-79.

As to quaternary structure, monomer.

Its subcellular location is the mitochondrion intermembrane space. The polypeptide is Coiled-coil-helix-coiled-coil-helix domain-containing protein 5 (CHCHD5) (Homo sapiens (Human)).